A 179-amino-acid chain; its full sequence is Large ribosomal subunit protein uL6 (179 aa).

Belongs to the universal ribosomal protein uL6 family. As to quaternary structure, part of the 50S ribosomal subunit.

Its function is as follows. This protein binds to the 23S rRNA, and is important in its secondary structure. It is located near the subunit interface in the base of the L7/L12 stalk, and near the tRNA binding site of the peptidyltransferase center. The polypeptide is Large ribosomal subunit protein uL6 (Streptomyces avermitilis (strain ATCC 31267 / DSM 46492 / JCM 5070 / NBRC 14893 / NCIMB 12804 / NRRL 8165 / MA-4680)).